A 528-amino-acid polypeptide reads, in one-letter code: Glucose-6-phosphate isomerase (528 aa).

The active-site Proton donor is Glu322. Active-site residues include His351 and Lys455.

It belongs to the GPI family.

The protein resides in the cytoplasm. The enzyme catalyses alpha-D-glucose 6-phosphate = beta-D-fructose 6-phosphate. It functions in the pathway carbohydrate biosynthesis; gluconeogenesis. The protein operates within carbohydrate degradation; glycolysis; D-glyceraldehyde 3-phosphate and glycerone phosphate from D-glucose: step 2/4. In terms of biological role, catalyzes the reversible isomerization of glucose-6-phosphate to fructose-6-phosphate. This is Glucose-6-phosphate isomerase from Nostoc punctiforme (strain ATCC 29133 / PCC 73102).